The chain runs to 132 residues: MRHRHSGRQLNRNSSHRKAMFKNMVTSLVEHELIKTTLPKAKELRRYAEPLITLSKSDSVANRRLAFARLGNKATVGKLFNELGPRYEGRPGGYLRIMKCGFRAGDKAPMAYVELVDRPAPVAAEPVESSED.

It belongs to the bacterial ribosomal protein bL17 family. As to quaternary structure, part of the 50S ribosomal subunit. Contacts protein L32.

The chain is Large ribosomal subunit protein bL17 from Saccharophagus degradans (strain 2-40 / ATCC 43961 / DSM 17024).